The following is a 467-amino-acid chain: Pup--protein ligase (467 aa).

E12 contacts Mg(2+). Residue R56 participates in ATP binding. Y58 is a Mg(2+) binding site. D60 functions as the Proton acceptor in the catalytic mechanism. A Mg(2+)-binding site is contributed by E66. ATP contacts are provided by T69 and W431.

It belongs to the Pup ligase/Pup deamidase family. Pup-conjugating enzyme subfamily.

The catalysed reaction is ATP + [prokaryotic ubiquitin-like protein]-L-glutamate + [protein]-L-lysine = ADP + phosphate + N(6)-([prokaryotic ubiquitin-like protein]-gamma-L-glutamyl)-[protein]-L-lysine.. It participates in protein degradation; proteasomal Pup-dependent pathway. It functions in the pathway protein modification; protein pupylation. Functionally, catalyzes the covalent attachment of the prokaryotic ubiquitin-like protein modifier Pup to the proteasomal substrate proteins, thereby targeting them for proteasomal degradation. This tagging system is termed pupylation. The ligation reaction involves the side-chain carboxylate of the C-terminal glutamate of Pup and the side-chain amino group of a substrate lysine. In Corynebacterium jeikeium (strain K411), this protein is Pup--protein ligase.